Here is a 210-residue protein sequence, read N- to C-terminus: MAQRIVVTGTDTGIGKTVFAAALTDLLGACYWKPVQAGLAEETDSHRVQRLADLADDRLVPEAYRLAAPASPHLAARLDGVSIDPLCLNPPDTGGRPLVIEGAGGVMVPLTADTLYLDVFARWQWPVVLCARTSLGTINHSLLSLAALRSRGIAVLGVAFIGDANADSEETICRLGAVKRLGRLPWLPELTARSLQHAVAAEFRRADFAP.

13–18 is a binding site for ATP; that stretch reads GIGKTV. Residue threonine 17 participates in Mg(2+) binding. Lysine 33 is an active-site residue. Residue glutamate 101 participates in Mg(2+) binding. Residues 101 to 104 and 185 to 187 each bind ATP; these read EGAG and PWL.

This sequence belongs to the dethiobiotin synthetase family. As to quaternary structure, homodimer. Requires Mg(2+) as cofactor.

Its subcellular location is the cytoplasm. It carries out the reaction (7R,8S)-7,8-diammoniononanoate + CO2 + ATP = (4R,5S)-dethiobiotin + ADP + phosphate + 3 H(+). Its pathway is cofactor biosynthesis; biotin biosynthesis; biotin from 7,8-diaminononanoate: step 1/2. In terms of biological role, catalyzes a mechanistically unusual reaction, the ATP-dependent insertion of CO2 between the N7 and N8 nitrogen atoms of 7,8-diaminopelargonic acid (DAPA, also called 7,8-diammoniononanoate) to form a ureido ring. This chain is ATP-dependent dethiobiotin synthetase BioD, found in Bradyrhizobium sp. (strain BTAi1 / ATCC BAA-1182).